A 275-amino-acid chain; its full sequence is Putative phosphoenolpyruvate synthase regulatory protein (275 aa).

153-160 serves as a coordination point for ADP; the sequence is GVSRTGKT.

This sequence belongs to the pyruvate, phosphate/water dikinase regulatory protein family. PSRP subfamily.

It carries out the reaction [pyruvate, water dikinase] + ADP = [pyruvate, water dikinase]-phosphate + AMP + H(+). The enzyme catalyses [pyruvate, water dikinase]-phosphate + phosphate + H(+) = [pyruvate, water dikinase] + diphosphate. Its function is as follows. Bifunctional serine/threonine kinase and phosphorylase involved in the regulation of the phosphoenolpyruvate synthase (PEPS) by catalyzing its phosphorylation/dephosphorylation. The chain is Putative phosphoenolpyruvate synthase regulatory protein from Nitrosomonas europaea (strain ATCC 19718 / CIP 103999 / KCTC 2705 / NBRC 14298).